A 439-amino-acid chain; its full sequence is Trigger factor (439 aa).

In terms of domain architecture, PPIase FKBP-type spans 165 to 250 (GDFAKFDFEG…LHEIQELKLP (86 aa)).

It belongs to the FKBP-type PPIase family. Tig subfamily.

It localises to the cytoplasm. The enzyme catalyses [protein]-peptidylproline (omega=180) = [protein]-peptidylproline (omega=0). Involved in protein export. Acts as a chaperone by maintaining the newly synthesized protein in an open conformation. Functions as a peptidyl-prolyl cis-trans isomerase. This chain is Trigger factor, found in Campylobacter lari (strain RM2100 / D67 / ATCC BAA-1060).